A 1010-amino-acid chain; its full sequence is Protein translocase subunit SecA (1010 aa).

ATP is bound by residues Gln-86, Gly-104–Thr-108, and Asp-535. Positions Gln-893–Ala-904 are enriched in low complexity. The interval Gln-893–Arg-916 is disordered. Cys-920, Cys-922, Cys-931, and His-932 together coordinate Zn(2+). The span at Gln-950–Ala-981 shows a compositional bias: low complexity. The interval Gln-950–Lys-1010 is disordered.

Belongs to the SecA family. As to quaternary structure, monomer and homodimer. Part of the essential Sec protein translocation apparatus which comprises SecA, SecYEG and auxiliary proteins SecDF. Other proteins may also be involved. It depends on Zn(2+) as a cofactor.

It localises to the cell membrane. The protein localises to the cytoplasm. It catalyses the reaction ATP + H2O + cellular proteinSide 1 = ADP + phosphate + cellular proteinSide 2.. Its function is as follows. Part of the Sec protein translocase complex. Interacts with the SecYEG preprotein conducting channel. Has a central role in coupling the hydrolysis of ATP to the transfer of proteins into and across the cell membrane, serving as an ATP-driven molecular motor driving the stepwise translocation of polypeptide chains across the membrane. The polypeptide is Protein translocase subunit SecA (Roseiflexus sp. (strain RS-1)).